The following is a 260-amino-acid chain: Indole-3-glycerol phosphate synthase (260 aa).

Belongs to the TrpC family.

The enzyme catalyses 1-(2-carboxyphenylamino)-1-deoxy-D-ribulose 5-phosphate + H(+) = (1S,2R)-1-C-(indol-3-yl)glycerol 3-phosphate + CO2 + H2O. Its pathway is amino-acid biosynthesis; L-tryptophan biosynthesis; L-tryptophan from chorismate: step 4/5. The polypeptide is Indole-3-glycerol phosphate synthase (Leifsonia xyli subsp. xyli (strain CTCB07)).